Here is a 90-residue protein sequence, read N- to C-terminus: uncharacterized protein (90 aa).

It localises to the cytoplasm. This is an uncharacterized protein from Saccharomyces cerevisiae (strain ATCC 204508 / S288c) (Baker's yeast).